The chain runs to 181 residues: GTPase RhebL1 (181 aa).

Residues 30-36 (LEDYDPT), glycine 61, 117-120 (NKAD), and 147-148 (SA) each bind GTP. The Effector region signature appears at 33–41 (YDPTVENTY). Mg(2+) is bound at residue threonine 36. At cysteine 178 the chain carries Cysteine methyl ester. Cysteine 178 is lipidated: S-farnesyl cysteine. Positions 179–181 (HLM) are cleaved as a propeptide — removed in mature form.

The protein belongs to the small GTPase superfamily. Rheb family. In terms of assembly, interacts with MTOR.

The protein localises to the endomembrane system. It is found in the cytoplasm. The catalysed reaction is GTP + H2O = GDP + phosphate + H(+). Its function is as follows. Binds GTP and exhibits intrinsic GTPase activity. May activate NF-kappa-B-mediated gene transcription. Promotes signal transduction through MTOR, activates RPS6KB1, and is a downstream target of the small GTPase-activating proteins TSC1 and TSC2. This Bos taurus (Bovine) protein is GTPase RhebL1 (RHEBL1).